The sequence spans 249 residues: Low affinity immunoglobulin gamma Fc region receptor III-A (249 aa).

The signal sequence occupies residues 1–20 (MWQLLLPTALVLTAFSGIQA). Residues 21–203 (GLQKAVVNLD…SPSMFPPWHQ (183 aa)) lie on the Extracellular side of the membrane. Ig-like C2-type domains are found at residues 22-102 (LQKA…VQLE) and 119-188 (EGDP…FRIS). Cystine bridges form between Cys-46–Cys-88 and Cys-127–Cys-171. N-linked (GlcNAc...) asparagine glycosylation is found at Asn-62, Asn-164, and Asn-179. A helical transmembrane segment spans residues 204–224 (ITFCLLIGLLFAIDTVLYFSV). Residues 225 to 249 (RRGLQSPVADYEEPKIQWSKEPQDK) lie on the Cytoplasmic side of the membrane. A Phosphotyrosine modification is found at Tyr-235.

As to quaternary structure, forms a heterooligomeric complex with ITAM-containing signaling subunits FCER1G. Interacts (via transmembrane domain) with signaling subunits; this interaction is a prerequisite for receptor complex expression on the cell surface and intracellular signal transduction. Binds the Fc region of antigen-complexed IgG. In terms of processing, N-glycosylated. Post-translationally, phosphorylated following receptor ligation. As to expression, detected on myeloid cells, peripheral blood monocytes, splenic and bone marrow dendritic cells, and thioglycollate-elicited macrophages and neutrophils but absent from lymphoid populations with no expression observed on T cells, B cells, NK cells or other granulocytes (at protein level). Expressed in peripheral blood leukocytes, spleen, liver, thymus and small intestine. Expressed in splenic dendritic cell subsets (at protein level).

The protein resides in the cell membrane. Its function is as follows. Receptor for the invariable Fc fragment of immunoglobulin gamma (IgG). Binds with intermediate affinity to both IgG2a and IgG2b. Can bind to IgG2a and IgG2b monomers. Does not display binding to IgG1 or IgG3. Recognizes neutralizing virus-specific IgGs displayed on the cell surface of infected cells and triggers antibody-dependent cellular cytotoxicity (ADCC). Confers protection to lethal influenza virus infection. On splenic dendritic cells, uptakes antigen immune complexes and efficiently divert them into MHC class I and II antigen presentation pathways to provide for superior priming of CD4-positive and CD8-positive T cell immune responses. Mediates neutrophil activation by IgG complexes redundantly with FCGR2A. Plays a role in promoting bone resorption by enhancing osteoclast differentiation following binding to IgG2a. Also acts as a receptor for the Fc region of immunoglobulin epsilon (IgE). Binds with low affinity to both the a and b allotypes of IgE. Has also been shown to bind to IgE allotype a only but not to allotype b. Binds aggregated IgE but not the monomeric form and bound monomeric IgG is readily displaced by IgE complexes. Binding to IgE promotes macrophage-mediated phagocytosis, antigen presentation to T cells, production of pro-inflammatory cytokines and the late phase of cutaneous allergic reactions. Mediates enhanced ADCC in response to afucosylated IgGs. This Mus musculus (Mouse) protein is Low affinity immunoglobulin gamma Fc region receptor III-A.